A 116-amino-acid chain; its full sequence is FK506-binding protein 1 (116 aa).

One can recognise a PPIase FKBP-type domain in the interval 19-116 (GDKVSIHYTG…IFEVELLKIN (98 aa)).

This sequence belongs to the FKBP-type PPIase family. FKBP1 subfamily.

The protein resides in the cytoplasm. It carries out the reaction [protein]-peptidylproline (omega=180) = [protein]-peptidylproline (omega=0). With respect to regulation, inhibited by both FK506 and rapamycin. PPIases accelerate the folding of proteins. It catalyzes the cis-trans isomerization of proline imidic peptide bonds in oligopeptides. This is FK506-binding protein 1 (fpr1) from Aspergillus oryzae (strain ATCC 42149 / RIB 40) (Yellow koji mold).